A 580-amino-acid polypeptide reads, in one-letter code: 2-succinyl-5-enolpyruvyl-6-hydroxy-3-cyclohexene-1-carboxylate synthase (580 aa).

Residues 178 to 199 are disordered; that stretch reads LEPTPMPGDLTEPPAAAQPRDD.

The protein belongs to the TPP enzyme family. MenD subfamily. Homodimer. Requires Mg(2+) as cofactor. Mn(2+) serves as cofactor. Thiamine diphosphate is required as a cofactor.

The enzyme catalyses isochorismate + 2-oxoglutarate + H(+) = 5-enolpyruvoyl-6-hydroxy-2-succinyl-cyclohex-3-ene-1-carboxylate + CO2. The protein operates within quinol/quinone metabolism; 1,4-dihydroxy-2-naphthoate biosynthesis; 1,4-dihydroxy-2-naphthoate from chorismate: step 2/7. It functions in the pathway quinol/quinone metabolism; menaquinone biosynthesis. Functionally, catalyzes the thiamine diphosphate-dependent decarboxylation of 2-oxoglutarate and the subsequent addition of the resulting succinic semialdehyde-thiamine pyrophosphate anion to isochorismate to yield 2-succinyl-5-enolpyruvyl-6-hydroxy-3-cyclohexene-1-carboxylate (SEPHCHC). This is 2-succinyl-5-enolpyruvyl-6-hydroxy-3-cyclohexene-1-carboxylate synthase from Roseiflexus castenholzii (strain DSM 13941 / HLO8).